The following is a 465-amino-acid chain: Trigger factor (465 aa).

In terms of domain architecture, PPIase FKBP-type spans 164-245 (GDFVSIDLSA…VQSVKERELP (82 aa)). Residues 430–465 (GNTVDTAEMFGEPAAEPEQADAAQAGDAEKAAADSE) are disordered. A compositionally biased stretch (low complexity) spans 440–455 (GEPAAEPEQADAAQAG). Over residues 456-465 (DAEKAAADSE) the composition is skewed to basic and acidic residues.

Belongs to the FKBP-type PPIase family. Tig subfamily.

The protein localises to the cytoplasm. The enzyme catalyses [protein]-peptidylproline (omega=180) = [protein]-peptidylproline (omega=0). Involved in protein export. Acts as a chaperone by maintaining the newly synthesized protein in an open conformation. Functions as a peptidyl-prolyl cis-trans isomerase. The chain is Trigger factor from Nocardia farcinica (strain IFM 10152).